The sequence spans 430 residues: Phosphomethylpyrimidine synthase (430 aa).

Residues Asn67, Met96, Tyr125, His161, 183-185 (SRG), 224-227 (DALR), and Glu263 each bind substrate. A Zn(2+)-binding site is contributed by His267. Residue Tyr290 participates in substrate binding. His331 is a binding site for Zn(2+). Residues Cys406, Cys409, and Cys413 each coordinate [4Fe-4S] cluster.

It belongs to the ThiC family. Homodimer. It depends on [4Fe-4S] cluster as a cofactor.

The enzyme catalyses 5-amino-1-(5-phospho-beta-D-ribosyl)imidazole + S-adenosyl-L-methionine = 4-amino-2-methyl-5-(phosphooxymethyl)pyrimidine + CO + 5'-deoxyadenosine + formate + L-methionine + 3 H(+). It functions in the pathway cofactor biosynthesis; thiamine diphosphate biosynthesis. Its function is as follows. Catalyzes the synthesis of the hydroxymethylpyrimidine phosphate (HMP-P) moiety of thiamine from aminoimidazole ribotide (AIR) in a radical S-adenosyl-L-methionine (SAM)-dependent reaction. This is Phosphomethylpyrimidine synthase from Campylobacter jejuni subsp. jejuni serotype O:23/36 (strain 81-176).